The sequence spans 147 residues: ATP synthase subunit 9, mitochondrial (147 aa).

The N-terminal 66 residues, 1-66 (MASTRVLASR…TTRQAFQKRA (66 aa)), are a transit peptide targeting the mitochondrion. The next 2 helical transmembrane spans lie at 86–106 (SAAIGLTGAGIGIGLVFAALL) and 123–143 (AILGFAFVEAIGLFDLMVALM).

Belongs to the ATPase C chain family. In terms of assembly, F-type ATPases have 2 components, CF(1) - the catalytic core - and CF(0) - the membrane proton channel. CF(1) has five subunits: alpha(3), beta(3), gamma(1), delta(1), epsilon(1). CF(0) has three main subunits: a, b and c.

It is found in the mitochondrion membrane. Its function is as follows. Mitochondrial membrane ATP synthase (F(1)F(0) ATP synthase or Complex V) produces ATP from ADP in the presence of a proton gradient across the membrane which is generated by electron transport complexes of the respiratory chain. F-type ATPases consist of two structural domains, F(1) - containing the extramembraneous catalytic core and F(0) - containing the membrane proton channel, linked together by a central stalk and a peripheral stalk. During catalysis, ATP synthesis in the catalytic domain of F(1) is coupled via a rotary mechanism of the central stalk subunits to proton translocation. Part of the complex F(0) domain. A homomeric c-ring of probably 10 subunits is part of the complex rotary element. The polypeptide is ATP synthase subunit 9, mitochondrial (oli) (Neurospora crassa (strain ATCC 24698 / 74-OR23-1A / CBS 708.71 / DSM 1257 / FGSC 987)).